Here is a 320-residue protein sequence, read N- to C-terminus: o-succinylbenzoate synthase (320 aa).

Catalysis depends on Lys133, which acts as the Proton donor. Mg(2+) is bound by residues Asp161, Glu190, and Asp213. Lys235 serves as the catalytic Proton acceptor.

This sequence belongs to the mandelate racemase/muconate lactonizing enzyme family. MenC type 1 subfamily. It depends on a divalent metal cation as a cofactor.

It carries out the reaction (1R,6R)-6-hydroxy-2-succinyl-cyclohexa-2,4-diene-1-carboxylate = 2-succinylbenzoate + H2O. Its pathway is quinol/quinone metabolism; 1,4-dihydroxy-2-naphthoate biosynthesis; 1,4-dihydroxy-2-naphthoate from chorismate: step 4/7. It functions in the pathway quinol/quinone metabolism; menaquinone biosynthesis. Its function is as follows. Converts 2-succinyl-6-hydroxy-2,4-cyclohexadiene-1-carboxylate (SHCHC) to 2-succinylbenzoate (OSB). The protein is o-succinylbenzoate synthase of Salmonella paratyphi A (strain ATCC 9150 / SARB42).